The sequence spans 365 residues: Anhydro-N-acetylmuramic acid kinase (365 aa).

12–19 (GTSLDGID) lines the ATP pocket.

The protein belongs to the anhydro-N-acetylmuramic acid kinase family.

It catalyses the reaction 1,6-anhydro-N-acetyl-beta-muramate + ATP + H2O = N-acetyl-D-muramate 6-phosphate + ADP + H(+). It functions in the pathway amino-sugar metabolism; 1,6-anhydro-N-acetylmuramate degradation. It participates in cell wall biogenesis; peptidoglycan recycling. In terms of biological role, catalyzes the specific phosphorylation of 1,6-anhydro-N-acetylmuramic acid (anhMurNAc) with the simultaneous cleavage of the 1,6-anhydro ring, generating MurNAc-6-P. Is required for the utilization of anhMurNAc either imported from the medium or derived from its own cell wall murein, and thus plays a role in cell wall recycling. This Rhizorhabdus wittichii (strain DSM 6014 / CCUG 31198 / JCM 15750 / NBRC 105917 / EY 4224 / RW1) (Sphingomonas wittichii) protein is Anhydro-N-acetylmuramic acid kinase.